A 497-amino-acid chain; its full sequence is Validamine 7-phosphate valienyltransferase (497 aa).

Residue D158 participates in GDP-valienol binding. Validamine 7-phosphate is bound at residue H182. Residues R290, K295, R321, 325–326 (NR), 361–362 (ND), and T366 contribute to the GDP-valienol site. Position 383–386 (383–386 (DGQN)) interacts with validamine 7-phosphate. GDP-valienol is bound by residues 387 to 388 (LS) and E391.

Belongs to the glycosyltransferase 20 family. As to quaternary structure, homodimer.

It catalyses the reaction validamine 7-phosphate + GDP-valienol = validoxylamine A 7'-phosphate + GDP + H(+). Involved in the biosynthesis of the antifungal agent validamycin A. Catalyzes the condensation between GDP-valienol and validamine 7-phosphate via a nonglycosidic C-N bond formation to yield validoxylamine A 7'-phosphate. The chain is Validamine 7-phosphate valienyltransferase from Streptomyces hygroscopicus subsp. limoneus.